The following is a 542-amino-acid chain: POTE ankyrin domain family member C (542 aa).

7 ANK repeats span residues 138–171 (EDLDKLHRAAWWGKVPRKDLIVMLRDTDMNKRDK), 172–201 (QKRTALHLASANGNSEVVQLLLDRRCQLNV), 205–234 (KKRTALIKAVQCQEDECVLMLLEHGADQNI), 238–267 (YGNTTLHYAVHNEDKLMAKALLLYGADIES), 271–300 (CGLTPLLLGVHEQKQQVVKFLIKKKANLNA), 304–333 (YGRTALILAVCCGSASIVNLLLEQNVDVSS), and 337–373 (SGQTAREYAVSSHHHVICELLSDYKEKQMLKISSENS). Positions 369–494 (SSENSNPEQD…NTGISQDEIL (126 aa)) are disordered. Basic and acidic residues-rich tracts occupy residues 377 to 392 (QDLKLTSEEESQRLKV), 401 to 412 (MSQEPEINKDCD), and 466 to 481 (EEYHSDEQNDTRKQLS). Over residues 482–494 (EEQNTGISQDEIL) the composition is skewed to polar residues. Positions 489–538 (SQDEILTNKQKQIEVAEKKMNSELSLSHKKEEDLLRENSMLQEEIAMLIS) form a coiled coil.

Belongs to the POTE family. Expressed in prostate and testis.

The polypeptide is POTE ankyrin domain family member C (POTEC) (Homo sapiens (Human)).